The following is a 371-amino-acid chain: Aspartate-semialdehyde dehydrogenase (371 aa).

NADP(+)-binding positions include 9-12, 37-38, and Gln73; these read RGMV and TS. Residue Arg102 participates in phosphate binding. Cys135 functions as the Acyl-thioester intermediate in the catalytic mechanism. Residue Gln162 coordinates substrate. Residues 165-166 and Pro193 contribute to the NADP(+) site; that span reads SG. Glu241 lines the substrate pocket. Lys244 provides a ligand contact to phosphate. Arg268 is a binding site for substrate. Residue His275 is the Proton acceptor of the active site. Gln351 is a binding site for NADP(+).

The protein belongs to the aspartate-semialdehyde dehydrogenase family. As to quaternary structure, homodimer.

The catalysed reaction is L-aspartate 4-semialdehyde + phosphate + NADP(+) = 4-phospho-L-aspartate + NADPH + H(+). Its pathway is amino-acid biosynthesis; L-lysine biosynthesis via DAP pathway; (S)-tetrahydrodipicolinate from L-aspartate: step 2/4. It functions in the pathway amino-acid biosynthesis; L-methionine biosynthesis via de novo pathway; L-homoserine from L-aspartate: step 2/3. The protein operates within amino-acid biosynthesis; L-threonine biosynthesis; L-threonine from L-aspartate: step 2/5. Its function is as follows. Catalyzes the NADPH-dependent formation of L-aspartate-semialdehyde (L-ASA) by the reductive dephosphorylation of L-aspartyl-4-phosphate. This is Aspartate-semialdehyde dehydrogenase from Neisseria meningitidis serogroup A / serotype 4A (strain DSM 15465 / Z2491).